Reading from the N-terminus, the 305-residue chain is Dihydroorotate dehydrogenase B (NAD(+)), catalytic subunit (305 aa).

Residues Ser-20 and 44–45 each bind FMN; that span reads KG. Substrate contacts are provided by residues Lys-44 and 68–72; that span reads NAIGI. Residues Asn-98 and Asn-126 each coordinate FMN. Asn-126 is a binding site for substrate. Residue Cys-129 is the Nucleophile of the active site. 2 residues coordinate FMN: Lys-165 and Ile-191. 192 to 193 lines the substrate pocket; it reads NT. FMN-binding positions include Gly-217, 243 to 244, and 265 to 266; these read GG and GT.

The protein belongs to the dihydroorotate dehydrogenase family. Type 1 subfamily. As to quaternary structure, heterotetramer of 2 PyrK and 2 PyrD type B subunits. Requires FMN as cofactor.

Its subcellular location is the cytoplasm. The enzyme catalyses (S)-dihydroorotate + NAD(+) = orotate + NADH + H(+). Its pathway is pyrimidine metabolism; UMP biosynthesis via de novo pathway; orotate from (S)-dihydroorotate (NAD(+) route): step 1/1. Catalyzes the conversion of dihydroorotate to orotate with NAD(+) as electron acceptor. In Maridesulfovibrio salexigens (strain ATCC 14822 / DSM 2638 / NCIMB 8403 / VKM B-1763) (Desulfovibrio salexigens), this protein is Dihydroorotate dehydrogenase B (NAD(+)), catalytic subunit (pyrD).